Reading from the N-terminus, the 680-residue chain is DNA-directed RNA polymerase subunit beta' (680 aa).

C69, C71, C87, and C90 together coordinate Zn(2+). Positions 489, 491, and 493 each coordinate Mg(2+).

Belongs to the RNA polymerase beta' chain family. RpoC1 subfamily. In plastids the minimal PEP RNA polymerase catalytic core is composed of four subunits: alpha, beta, beta', and beta''. When a (nuclear-encoded) sigma factor is associated with the core the holoenzyme is formed, which can initiate transcription. Mg(2+) serves as cofactor. The cofactor is Zn(2+).

The protein localises to the plastid. The protein resides in the chloroplast. The enzyme catalyses RNA(n) + a ribonucleoside 5'-triphosphate = RNA(n+1) + diphosphate. Functionally, DNA-dependent RNA polymerase catalyzes the transcription of DNA into RNA using the four ribonucleoside triphosphates as substrates. The sequence is that of DNA-directed RNA polymerase subunit beta' from Amborella trichopoda.